The following is a 114-amino-acid chain: Putative ANKRD40 C-terminal-like protein (114 aa).

The polypeptide is Putative ANKRD40 C-terminal-like protein (Homo sapiens (Human)).